We begin with the raw amino-acid sequence, 79 residues long: Small ribosomal subunit protein bS18 (79 aa).

It belongs to the bacterial ribosomal protein bS18 family. In terms of assembly, part of the 30S ribosomal subunit. Forms a tight heterodimer with protein bS6.

Binds as a heterodimer with protein bS6 to the central domain of the 16S rRNA, where it helps stabilize the platform of the 30S subunit. The sequence is that of Small ribosomal subunit protein bS18 from Rhodopseudomonas palustris (strain BisB5).